The primary structure comprises 95 residues: Oxytetracycline polyketide synthase acyl carrier protein (95 aa).

The Carrier domain maps to 3-81; it reads LLTLSDLLTL…ALIEMTNASL (79 aa). Residue Ser-41 is modified to O-(pantetheine 4'-phosphoryl)serine.

In terms of processing, 4'-phosphopantetheine is transferred from CoA to a specific serine of the apo-ACP-like protein.

It participates in antibiotic biosynthesis; oxytetracycline biosynthesis. Acyl carrier protein. This chain is Oxytetracycline polyketide synthase acyl carrier protein, found in Streptomyces rimosus.